A 124-amino-acid chain; its full sequence is Galanin peptides (124 aa).

Residues 1 to 19 (MARGSVILLAWLLLVATLS) form the signal peptide. A propeptide spanning residues 20–30 (ATLGLGMPTKE) is cleaved from the precursor. T61 is subject to Threonine amide. S117 and S118 each carry phosphoserine.

Belongs to the galanin family.

It is found in the secreted. Endocrine hormone of the central and peripheral nervous systems that binds and activates the G protein-coupled receptors GALR1, GALR2, and GALR3. This small neuropeptide may regulate diverse physiologic functions including contraction of smooth muscle of the gastrointestinal and genitourinary tract, growth hormone and insulin release and adrenal secretion. This Rattus norvegicus (Rat) protein is Galanin peptides (Gal).